We begin with the raw amino-acid sequence, 54 residues long: U-reduvitoxin-Pr1a (54 aa).

Positions 1-19 (MKLLGLLLLVFTFMALAFA) are cleaved as a signal peptide. Intrachain disulfides connect cysteine 24-cysteine 39, cysteine 31-cysteine 44, and cysteine 38-cysteine 51.

The protein belongs to the venom Ptu1-like knottin family. As to expression, expressed by the venom gland (posterior main gland) (at protein level).

Its subcellular location is the secreted. Its function is as follows. Binds reversibly and blocks P/Q-type voltage-gated calcium channels (Cav). This chain is U-reduvitoxin-Pr1a, found in Platymeris rhadamanthus (Red spot assassin bug).